The following is a 555-amino-acid chain: F-box only protein 33 (555 aa).

The F-box domain occupies 65–111 (AAGAASLPSELIVHIFSFLPAPDRLRASASCSHWRECLFYPALWPQL).

As to quaternary structure, part of the SCF (SKP1-CUL1-F-box) E3 ubiquitin-protein ligase complex SCF(FBXO33) formed of CUL1, SKP1, RBX1 and FBXO33. Interacts via its N-terminus with YBX1 CSD domain. Directly interacts with SKP1 and CUL1.

It functions in the pathway protein modification; protein ubiquitination. Substrate recognition component of a SCF (SKP1-CUL1-F-box protein) E3 ubiquitin-protein ligase complex which mediates the ubiquitination and subsequent proteasomal degradation of target proteins. Probably recognizes and binds to phosphorylated target proteins. Recognizes YBX1. This chain is F-box only protein 33 (FBXO33), found in Homo sapiens (Human).